The chain runs to 2552 residues: Protein TIC 214 (2552 aa).

A run of 6 helical transmembrane segments spans residues 15–35 (LIFG…SYLF), 54–74 (LSYG…YLPF), 78–98 (LSNF…QFFW), 119–136 (TLAF…YTFF), 154–174 (FKIL…LICI), and 243–263 (ILAT…PIPF). A disordered region spans residues 304–325 (EEQKKDEKSADEEKKRAVEEEN). Residues 305 to 322 (EQKKDEKSADEEKKRAVE) are compositionally biased toward basic and acidic residues. A run of 3 helical transmembrane segments spans residues 362–382 (TLYT…AFLF), 423–443 (PFLV…SVYI), and 452–472 (FLFN…HFFF). Positions 2045–2077 (MKAEEQKKIDEEYEEKKEKRKKEQEEQGKAFDE) are disordered. Residues 2416–2511 (RRRRQLRIVN…IKKKLMRLRF (96 aa)) are a coiled coil.

Belongs to the TIC214 family. In terms of assembly, part of the Tic complex.

The protein resides in the plastid. The protein localises to the chloroplast inner membrane. Its function is as follows. Involved in protein precursor import into chloroplasts. May be part of an intermediate translocation complex acting as a protein-conducting channel at the inner envelope. This Pelargonium hortorum (Common geranium) protein is Protein TIC 214.